The sequence spans 387 residues: MERVYLDNNATTRLAPEALQAMLPFLTEEFGNPSSLHGQGRAPARALMAARRAVLELIGAEADSEILFTSGGTEADTTAIRSALAADPSRREIVTSTVEHAAVLALCDHLERQEGVTVHRIPVDGDGRLDIEAYRAALSPRVALVSLMWANNETGTVFPVEGLAELAHRAGALFHTDAVQAVGKVPIVLRGTEIDMLSLSAHKFHGPKGVGALWLRKGVPFQPLIRGGRQQRGHRAGTENIPGIVGLGRAAELALGGDHGAVRLLRDRLEQGILARVPKARVLGDPLDRLPNTSCVAFDFAEGEAIVMLLDRAGICVSSGAACASGAMEPSHVIRAMKVPFTAAHGAIRFSLSHWTTAAEIDRLLEVLPPIVDQLRALSPFGAEEVK.

Residues 72–73 (GT), N152, Q180, and 200–202 (SAH) contribute to the pyridoxal 5'-phosphate site. K203 is modified (N6-(pyridoxal phosphate)lysine). Pyridoxal 5'-phosphate is bound at residue T238. Catalysis depends on C323, which acts as the Cysteine persulfide intermediate. C323 provides a ligand contact to [2Fe-2S] cluster.

The protein belongs to the class-V pyridoxal-phosphate-dependent aminotransferase family. NifS/IscS subfamily. As to quaternary structure, homodimer. Pyridoxal 5'-phosphate is required as a cofactor.

It catalyses the reaction (sulfur carrier)-H + L-cysteine = (sulfur carrier)-SH + L-alanine. In terms of biological role, catalyzes the removal of elemental sulfur atoms from cysteine to produce alanine. Seems to participate in the biosynthesis of the nitrogenase metalloclusters by providing the inorganic sulfur required for the Fe-S core formation. The polypeptide is Cysteine desulfurase (Cereibacter sphaeroides (Rhodobacter sphaeroides)).